Reading from the N-terminus, the 122-residue chain is MDIVFIEQLSVITTIGVYDWEQTIEQKLVFDIEMAWDNRKAAKSDDVADCLSYADIAETVVSHVEGARFALVERVAEEVAELLLARFNSPWVRIKLSKPGAVARAANVGVIIERGNNLKENN.

Residues glutamate 21, tyrosine 53, and 72-73 each bind substrate; that span reads VE. Lysine 98 (proton donor/acceptor) is an active-site residue.

It belongs to the DHNA family. Homooctamer.

It catalyses the reaction 7,8-dihydroneopterin = 6-hydroxymethyl-7,8-dihydropterin + glycolaldehyde. It carries out the reaction 7,8-dihydroneopterin = 7,8-dihydromonapterin. It functions in the pathway cofactor biosynthesis; tetrahydrofolate biosynthesis; 2-amino-4-hydroxy-6-hydroxymethyl-7,8-dihydropteridine diphosphate from 7,8-dihydroneopterin triphosphate: step 3/4. In terms of biological role, catalyzes the conversion of 7,8-dihydroneopterin to 6-hydroxymethyl-7,8-dihydropterin. Can use L-threo-dihydroneopterin and D-erythro-dihydroneopterin as substrates for the formation of 6-hydroxymethyldihydropterin, but it can also catalyze the epimerization of carbon 2' of dihydroneopterin to dihydromonapterin at appreciable velocity. The protein is Dihydroneopterin aldolase (folB) of Escherichia coli O6:H1 (strain CFT073 / ATCC 700928 / UPEC).